The following is a 75-amino-acid chain: Small ribosomal subunit protein eS31 (75 aa).

Residues cysteine 41, cysteine 44, cysteine 60, and cysteine 63 each coordinate Zn(2+). The C4-type zinc-finger motif lies at 41-63; that stretch reads CPRCGSIMAHHLKPNERWSCGKC.

Belongs to the eukaryotic ribosomal protein eS31 family. As to quaternary structure, part of the 30S ribosomal subunit. Zn(2+) is required as a cofactor.

The sequence is that of Small ribosomal subunit protein eS31 from Saccharolobus solfataricus (strain ATCC 35092 / DSM 1617 / JCM 11322 / P2) (Sulfolobus solfataricus).